We begin with the raw amino-acid sequence, 377 residues long: Succinyl-diaminopimelate desuccinylase (377 aa).

A Zn(2+)-binding site is contributed by His-66. The active site involves Asp-68. Position 99 (Asp-99) interacts with Zn(2+). Catalysis depends on Glu-133, which acts as the Proton acceptor. Residues Glu-134, Glu-163, and His-349 each coordinate Zn(2+).

This sequence belongs to the peptidase M20A family. DapE subfamily. Homodimer. Zn(2+) is required as a cofactor. It depends on Co(2+) as a cofactor.

It carries out the reaction N-succinyl-(2S,6S)-2,6-diaminopimelate + H2O = (2S,6S)-2,6-diaminopimelate + succinate. It functions in the pathway amino-acid biosynthesis; L-lysine biosynthesis via DAP pathway; LL-2,6-diaminopimelate from (S)-tetrahydrodipicolinate (succinylase route): step 3/3. Functionally, catalyzes the hydrolysis of N-succinyl-L,L-diaminopimelic acid (SDAP), forming succinate and LL-2,6-diaminopimelate (DAP), an intermediate involved in the bacterial biosynthesis of lysine and meso-diaminopimelic acid, an essential component of bacterial cell walls. This is Succinyl-diaminopimelate desuccinylase from Legionella pneumophila (strain Paris).